Here is a 533-residue protein sequence, read N- to C-terminus: Berberine bridge enzyme-like 12 (533 aa).

The N-terminal stretch at 1–20 is a signal peptide; the sequence is MYLIFLLFFAASYSMSLSSA. Cys-32 and Cys-95 are disulfide-bonded. 6 N-linked (GlcNAc...) asparagine glycosylation sites follow: Asn-35, Asn-70, Asn-133, Asn-296, Asn-412, and Asn-417. One can recognise an FAD-binding PCMH-type domain in the interval 73–249; sequence SMPKPSIIIV…LAFKVKLVTV (177 aa). Positions 110 to 174 form a cross-link, 6-(S-cysteinyl)-8alpha-(pros-histidyl)-FAD (His-Cys); it reads HDYDGLSYVS…EVHAFPAGVC (65 aa).

This sequence belongs to the oxygen-dependent FAD-linked oxidoreductase family. FAD serves as cofactor. Post-translationally, the FAD cofactor is bound via a bicovalent 6-S-cysteinyl, 8alpha-N1-histidyl FAD linkage.

It is found in the secreted. The protein resides in the cell wall. The chain is Berberine bridge enzyme-like 12 from Arabidopsis thaliana (Mouse-ear cress).